The sequence spans 186 residues: Interferon beta (186 aa).

The first 21 residues, 1-21, serve as a signal peptide directing secretion; sequence MTGRCILQIALLVCFFTTAHS. Y24 carries the phosphotyrosine modification. 4 N-linked (GlcNAc...) asparagine glycosylation sites follow: N46, N101, N131, and N136. Cysteines 52 and 161 form a disulfide.

It belongs to the alpha/beta interferon family. Monomer.

The protein localises to the secreted. In terms of biological role, type I interferon cytokine that plays a key role in the innate immune response to infection, developing tumors and other inflammatory stimuli. Signals via binding to high-affinity (IFNAR2) and low-affinity (IFNAR1) heterodimeric receptor, activating the canonical Jak-STAT signaling pathway resulting in transcriptional activation or repression of interferon-regulated genes that encode the effectors of the interferon response, such as antiviral proteins, regulators of cell proliferation and differentiation, and immunoregulatory proteins. Signals mostly via binding to a IFNAR1-IFNAR2 heterodimeric receptor, but can also function with IFNAR1 alone and independently of Jak-STAT pathways. Elicits a wide variety of responses, including antiviral and antibacterial activities, and can regulate the development of B-cells, myelopoiesis and lipopolysaccharide (LPS)-inducible production of tumor necrosis factor. Plays a role in neuronal homeostasis by regulating dopamine turnover and protecting dopaminergic neurons: acts by promoting neuronal autophagy and alpha-synuclein clearance, thereby preventing dopaminergic neuron loss. IFNB1 is more potent than interferon-alpha (IFN-alpha) in inducing the apoptotic and antiproliferative pathways required for control of tumor cell growth. The polypeptide is Interferon beta (IFNB1) (Felis catus (Cat)).